Consider the following 376-residue polypeptide: Beta sliding clamp (376 aa).

Belongs to the beta sliding clamp family. As to quaternary structure, forms a ring-shaped head-to-tail homodimer around DNA which binds and tethers DNA polymerases and other proteins to the DNA. The DNA replisome complex has a single clamp-loading complex (3 tau and 1 each of delta, delta', psi and chi subunits) which binds 3 Pol III cores (1 core on the leading strand and 2 on the lagging strand) each with a beta sliding clamp dimer. Additional proteins in the replisome are other copies of gamma, psi and chi, Ssb, DNA helicase and RNA primase.

It is found in the cytoplasm. In terms of biological role, confers DNA tethering and processivity to DNA polymerases and other proteins. Acts as a clamp, forming a ring around DNA (a reaction catalyzed by the clamp-loading complex) which diffuses in an ATP-independent manner freely and bidirectionally along dsDNA. Initially characterized for its ability to contact the catalytic subunit of DNA polymerase III (Pol III), a complex, multichain enzyme responsible for most of the replicative synthesis in bacteria; Pol III exhibits 3'-5' exonuclease proofreading activity. The beta chain is required for initiation of replication as well as for processivity of DNA replication. In Streptomyces coelicolor (strain ATCC BAA-471 / A3(2) / M145), this protein is Beta sliding clamp (dnaN).